The chain runs to 211 residues: Superoxide dismutase [Cu-Zn], chloroplastic (211 aa).

Residues 1 to 57 constitute a chloroplast transit peptide; sequence MQAILAAAMAAQTLLFSATAPPASLFQSPSSARPFHSLRLAAGPAGAAAARALVVAD. Positions 103, 105, and 120 each coordinate Cu cation. Cysteine 114 and cysteine 203 are joined by a disulfide. Zn(2+) is bound by residues histidine 120, histidine 128, histidine 137, and aspartate 140. Histidine 177 contacts Cu cation.

It belongs to the Cu-Zn superoxide dismutase family. As to quaternary structure, homotetramer. It depends on Cu cation as a cofactor. Zn(2+) is required as a cofactor.

The protein resides in the plastid. Its subcellular location is the chloroplast. The enzyme catalyses 2 superoxide + 2 H(+) = H2O2 + O2. Its function is as follows. Destroys radicals which are normally produced within the cells and which are toxic to biological systems. The protein is Superoxide dismutase [Cu-Zn], chloroplastic (SODCP) of Oryza sativa subsp. japonica (Rice).